Consider the following 137-residue polypeptide: MAIARRISRIASLIKQEISQMLLHGIKDNRVGIGMVSVTDVDVSGDLQHAKVFVSIYGSDEVRSQTMAGLRSATGYVRSELGKRIRMRRTPEVIFVEDRSLERGTEILSLLNKLSQERQQQEIEDITHKESHQDTIE.

The protein belongs to the RbfA family. As to quaternary structure, monomer. Binds 30S ribosomal subunits, but not 50S ribosomal subunits or 70S ribosomes.

Its subcellular location is the cytoplasm. One of several proteins that assist in the late maturation steps of the functional core of the 30S ribosomal subunit. Associates with free 30S ribosomal subunits (but not with 30S subunits that are part of 70S ribosomes or polysomes). Required for efficient processing of 16S rRNA. May interact with the 5'-terminal helix region of 16S rRNA. The sequence is that of Ribosome-binding factor A from Trichodesmium erythraeum (strain IMS101).